The following is a 1109-amino-acid chain: Myosin ID heavy chain (1109 aa).

One can recognise a Myosin motor domain in the interval 7 to 687 (HGVDDMVMLS…TVFNLEELRE (681 aa)). 101–108 (GESGAGKT) lines the ATP pocket. An actin-binding region spans residues 564–586 (IGALVKALSACTPHYIRCIKPNG). The 195-residue stretch at 725–919 (KERRRLSIER…VSTPSDGLPA (195 aa)) folds into the TH1 domain. The SH3 domain maps to 958 to 1017 (NVKPSAKALYDFDAESSMELSFKEGDILTVLDQSSGDWWDAELKGRRGKVPSNYLQLIKN). The tract at residues 1017 to 1109 (NAAPPRAGGP…APRGGMAPRV (93 aa)) is disordered. Residues 1030 to 1043 (TGNRAPTTTTTSGG) show a composition bias toward low complexity.

This sequence belongs to the TRAFAC class myosin-kinesin ATPase superfamily. Myosin family. In terms of assembly, myosin I heavy chain is single-headed. Dimer of a heavy and a light chain. Inability to self-assemble into filaments.

It localises to the cell projection. Its subcellular location is the pseudopodium. The protein localises to the cytoplasm. The protein resides in the cell cortex. Functionally, myosin is a protein that binds to actin and has ATPase activity that is activated by actin. Myosin id may have a role in chemotaxis and aggregation; it could serve to stabilize and even retract cortical structures, such as pseudopods and lamellopods. Involved in the process of phagocytosis. The protein is Myosin ID heavy chain (myoD) of Dictyostelium discoideum (Social amoeba).